Consider the following 3333-residue polypeptide: Laminin subunit alpha-3 (3333 aa).

Residues 1–35 (MAAAARPRGRALGPVLPPTPLLLLVLRVLPACGAT) form the signal peptide. In terms of domain architecture, Laminin N-terminal spans 43–298 (AGLSLHPTYF…SIKDISIGGQ (256 aa)). 2 N-linked (GlcNAc...) asparagine glycosylation sites follow: Asn-142 and Asn-242. Positions 298-728 (QCVCNGHAEV…NNYYFPDLHH (431 aa)) are domain V. 29 cysteine pairs are disulfide-bonded: Cys-299–Cys-308, Cys-301–Cys-319, Cys-321–Cys-330, Cys-333–Cys-353, Cys-356–Cys-365, Cys-358–Cys-390, Cys-393–Cys-402, Cys-405–Cys-423, Cys-426–Cys-436, Cys-428–Cys-443, Cys-445–Cys-454, Cys-457–Cys-467, Cys-491–Cys-503, Cys-493–Cys-509, Cys-511–Cys-520, Cys-523–Cys-533, Cys-536–Cys-548, Cys-538–Cys-555, Cys-557–Cys-566, Cys-569–Cys-586, Cys-601–Cys-610, Cys-613–Cys-628, Cys-631–Cys-645, Cys-633–Cys-652, Cys-654–Cys-663, Cys-666–Cys-681, Cys-684–Cys-696, Cys-686–Cys-703, and Cys-705–Cys-714. Laminin EGF-like domains follow at residues 299 to 355 (CVCN…ECEA), 356 to 425 (CNCH…GCIP), 426 to 469 (CSCD…FCLR), 491 to 535 (CDCN…ICQA), 536 to 588 (CWCS…ACDP), 590 to 630 (GTIN…GCSE), 631 to 683 (CKCH…GCQG), and 684 to 728 (CQCD…DLHH). Residues 796 to 1265 (TEAVSGHITI…VAFYHKGALP (470 aa)) are domain IV 1 (domain IV B). 16 cysteine pairs are disulfide-bonded: Cys-1266–Cys-1278, Cys-1268–Cys-1285, Cys-1287–Cys-1296, Cys-1299–Cys-1309, Cys-1312–Cys-1319, Cys-1314–Cys-1326, Cys-1328–Cys-1337, Cys-1340–Cys-1353, Cys-1356–Cys-1371, Cys-1358–Cys-1378, Cys-1380–Cys-1389, Cys-1392–Cys-1402, Cys-1405–Cys-1417, Cys-1407–Cys-1424, Cys-1426–Cys-1435, and Cys-1438–Cys-1453. 4 Laminin EGF-like domains span residues 1266 to 1311 (CECH…RCKP), 1312 to 1355 (CSCG…GCEG), 1356 to 1404 (CNCS…ECVP), and 1405 to 1455 (CNCN…GCTS). The domain III B stretch occupies residues 1266-1465 (CECHPTGATG…CFCFGVNNQC (200 aa)). The region spanning 1476–1653 (VDMLGWHLET…SGRIALAVEI (178 aa)) is the Laminin IV type A domain. Positions 1654–1821 (CACPPAYAGD…DSSPAEECDD (168 aa)) are domain III A. Cystine bridges form between Cys-1687–Cys-1696, Cys-1689–Cys-1703, Cys-1706–Cys-1715, Cys-1718–Cys-1731, Cys-1734–Cys-1746, Cys-1736–Cys-1755, Cys-1757–Cys-1766, and Cys-1769–Cys-1784. Laminin EGF-like domains are found at residues 1687–1733 (CNCN…SCRA) and 1734–1786 (CPCP…SCQP). In terms of domain architecture, Laminin EGF-like 15; truncated spans 1787-1821 (CSCNSNGQLGSCHPLTGDCINQEPKDSSPAEECDD). The interval 1822–2389 (CDSCVMTLLN…ARDAASKVAV (568 aa)) is domain II and I. Coiled-coil stretches lie at residues 1852–1941 (ASAG…KNVI) and 1987–2169 (KHLR…DELV). A Cell attachment site motif is present at residues 2278-2280 (RGD). The stretch at 2322-2388 (RTQNEDFKKA…QARDAASKVA (67 aa)) forms a coiled coil. 3 N-linked (GlcNAc...) asparagine glycosylation sites follow: Asn-2365, Asn-2502, and Asn-2584. Laminin G-like domains lie at 2390 to 2591 (PMRF…VEPC), 2598 to 2760 (SDKN…TKKC), 2767 to 2927 (VRSA…LGGC), 2986 to 3150 (ALQF…VSSC), and 3157 to 3330 (KGIY…LNGC). 5 cysteine pairs are disulfide-bonded: Cys-2561/Cys-2591, Cys-2737/Cys-2760, Cys-2895/Cys-2927, Cys-3127/Cys-3150, and Cys-3302/Cys-3330.

As to quaternary structure, laminin is a complex glycoprotein, consisting of three different polypeptide chains (alpha, beta, gamma), which are bound to each other by disulfide bonds into a cross-shaped molecule comprising one long and three short arms with globules at each end. Alpha-3 is a subunit of laminin-5 (laminin-332 or epiligrin/kalinin/nicein), laminin-6 (laminin-311 or K-laminin) and laminin-7 (laminin-321 or KS-laminin). Skin; respiratory, urinary, and digestive epithelia and in other specialized tissues with prominent secretory or protective functions. Epithelial basement membrane, and epithelial cell tongue that migrates into a wound bed. A differential and focal expression of the subunit alpha-3 is observed in the CNS.

The protein localises to the secreted. It is found in the extracellular space. Its subcellular location is the extracellular matrix. The protein resides in the basement membrane. Its function is as follows. Binding to cells via a high affinity receptor, laminin is thought to mediate the attachment, migration and organization of cells into tissues during embryonic development by interacting with other extracellular matrix components. Functionally, laminin-5 is thought to be involved in (1) cell adhesion via integrin alpha-3/beta-1 in focal adhesion and integrin alpha-6/beta-4 in hemidesmosomes, (2) signal transduction via tyrosine phosphorylation of pp125-FAK and p80, (3) differentiation of keratinocytes. The polypeptide is Laminin subunit alpha-3 (LAMA3) (Homo sapiens (Human)).